The following is an 88-amino-acid chain: Small ribosomal subunit protein bS20 (88 aa).

Residues 1-22 (MANIKSSKKRSIQSEKKRKYNS) show a composition bias toward basic residues. The segment at 1 to 26 (MANIKSSKKRSIQSEKKRKYNSSKKS) is disordered.

It belongs to the bacterial ribosomal protein bS20 family.

Its function is as follows. Binds directly to 16S ribosomal RNA. This Wigglesworthia glossinidia brevipalpis protein is Small ribosomal subunit protein bS20.